A 385-amino-acid polypeptide reads, in one-letter code: Dual-specificity RNA methyltransferase RlmN (385 aa).

E113 acts as the Proton acceptor in catalysis. The Radical SAM core domain maps to 120 to 352 (VGRAGALCVS…NRAGYASPIR (233 aa)). An intrachain disulfide couples C127 to C363. 3 residues coordinate [4Fe-4S] cluster: C134, C138, and C141. S-adenosyl-L-methionine contacts are provided by residues 189–190 (GE), S221, 243–245 (SLH), and N320. C363 (S-methylcysteine intermediate) is an active-site residue.

This sequence belongs to the radical SAM superfamily. RlmN family. It depends on [4Fe-4S] cluster as a cofactor.

The protein localises to the cytoplasm. The catalysed reaction is adenosine(2503) in 23S rRNA + 2 reduced [2Fe-2S]-[ferredoxin] + 2 S-adenosyl-L-methionine = 2-methyladenosine(2503) in 23S rRNA + 5'-deoxyadenosine + L-methionine + 2 oxidized [2Fe-2S]-[ferredoxin] + S-adenosyl-L-homocysteine. It carries out the reaction adenosine(37) in tRNA + 2 reduced [2Fe-2S]-[ferredoxin] + 2 S-adenosyl-L-methionine = 2-methyladenosine(37) in tRNA + 5'-deoxyadenosine + L-methionine + 2 oxidized [2Fe-2S]-[ferredoxin] + S-adenosyl-L-homocysteine. Functionally, specifically methylates position 2 of adenine 2503 in 23S rRNA and position 2 of adenine 37 in tRNAs. m2A2503 modification seems to play a crucial role in the proofreading step occurring at the peptidyl transferase center and thus would serve to optimize ribosomal fidelity. The chain is Dual-specificity RNA methyltransferase RlmN from Phenylobacterium zucineum (strain HLK1).